The following is a 902-amino-acid chain: Adhesion G-protein coupled receptor D1 (902 aa).

A signal peptide spans 1–25 (MKKLLPLCCWHSWLLLFYCDFQVRG). Residues 26–598 (AHTRSHVHPG…GHQVALSSIS (573 aa)) are Extracellular-facing. N-linked (GlcNAc...) asparagine glycans are attached at residues asparagine 68, asparagine 76, asparagine 83, asparagine 89, asparagine 121, asparagine 183, asparagine 217, asparagine 310, asparagine 330, asparagine 337, asparagine 347, asparagine 422, asparagine 504, asparagine 529, and asparagine 561. Residues 111-304 (KGVTFLYYRK…VNTMAPTNAY (194 aa)) enclose the Pentraxin (PTX) domain. A GAIN-B domain is found at 399-585 (QVAIVGSSSM…AILMQVVPLE (187 aa)). 2 disulfides stabilise this stretch: cysteine 538–cysteine 567 and cysteine 555–cysteine 569. Positions 538–585 (CAFLDFSSGEGIWSNQGCALTEGNLSYSICRCTHLTNFAILMQVVPLE) are GPS. The stachel stretch occupies residues 574 to 582 (NFAILMQVV). Glutamine 591 lines the 17beta-hydroxy-5alpha-androstan-3-one pocket. The chain crosses the membrane as a helical span at residues 599 to 619 (YIGCSLSVLCLAITLVTFAVL). The Cytoplasmic segment spans residues 620–630 (SSVSTIRNQRY). Residues 631–651 (HIHANLSCAVLVAQVLLLISF) traverse the membrane as a helical segment. Residues 652–661 (RFEPGTAPCQ) lie on the Extracellular side of the membrane. Cysteines 660 and 732 form a disulfide. Residues 662 to 682 (VLAMLLHYFFLSAFAWMLVEG) traverse the membrane as a helical segment. At 683-702 (LHLYSMVIKVFGSEDSKHRY) the chain is on the cytoplasmic side. The helical transmembrane segment at 703-723 (YYGIGWGFPLLICIISIVFAM) threads the bilayer. Residues 724–739 (DSYGTSKNCWLSLGNG) lie on the Extracellular side of the membrane. The chain crosses the membrane as a helical span at residues 740–760 (AIWAFVAPALFIIVVNIGILI). At 761 to 788 (AVTRVISQISAENYKIHGDPSAFKLTAK) the chain is on the cytoplasmic side. A helical membrane pass occupies residues 789 to 809 (AVAVLLPILGTSWVFGVLAVN). The Extracellular segment spans residues 810–812 (NQA). A helical transmembrane segment spans residues 813–833 (MVFQYMFAILNSLQGFFIFLF). Over 834-902 (HCLLNSEVRA…SGHRVDLSAV (69 aa)) the chain is Cytoplasmic. The tract at residues 865–902 (KPFSSDIMNGTRPATGSTRLSPWDKSSHSGHRVDLSAV) is disordered. Positions 870-884 (DIMNGTRPATGSTRL) are enriched in polar residues. The segment covering 889 to 902 (KSSHSGHRVDLSAV) has biased composition (basic and acidic residues).

The protein belongs to the G-protein coupled receptor 2 family. Adhesion G-protein coupled receptor (ADGR) subfamily. As to quaternary structure, heterodimer of 2 chains generated by proteolytic processing; the large extracellular N-terminal fragment and the membrane-bound C-terminal fragment predominantly remain associated and non-covalently linked. Interacts with ESYT1; interaction takes place in absence of cytosolic calcium and inhibits the G protein-coupled receptor activity of ADGRD1. Autoproteolytically processed at the GPS region of the GAIN-B domain; this cleavage modulates receptor activity. Cleavage takes place early in the secretory pathway before N-glycosylation.

It is found in the cell membrane. With respect to regulation, forms a heterodimer of 2 chains generated by proteolytic processing that remain associated through non-covalent interactions mediated by the GAIN-B domain. In the inactivated receptor, the Stachel sequence (also named stalk) is embedded in the GAIN-B domain, where it adopts a beta-strand conformation. On activation, the Stachel moves into the 7 transmembrane region and adopts a twisted hook-shaped configuration that forms contacts within the receptor, leading to coupling of a G-alpha protein, which activates signaling. The cleaved GAIN-B and N-terminal domains can then dissociate from the rest of the receptor. Interaction with ESYT1 in absence of cytosolic calcium inhibits the G protein-coupled receptor activity; interaction and inhibition is relieved when cytosolic calcium increases. In terms of biological role, adhesion G-protein coupled receptor (aGPCR) for androgen hormone 5alpha-dihydrotestosterone (5alpha-DHT), also named 17beta-hydroxy-5alpha-androstan-3-one, the most potent hormone among androgens. Also activated by methenolone drug. Ligand binding causes a conformation change that triggers signaling via guanine nucleotide-binding proteins (G proteins) and modulates the activity of downstream effectors, such as adenylate cyclase. ADGRD1 is coupled to G(s) G proteins and mediates activation of adenylate cyclase activity. Acts as a 5alpha-DHT receptor in muscle cells, thereby increasing intracellular cyclic AMP (cAMP) levels and enhancing muscle strength. This is Adhesion G-protein coupled receptor D1 (ADGRD1) from Bos taurus (Bovine).